The sequence spans 158 residues: NADH-quinone oxidoreductase subunit B (158 aa).

[4Fe-4S] cluster-binding residues include Cys37, Cys38, Cys102, and Cys132.

It belongs to the complex I 20 kDa subunit family. As to quaternary structure, NDH-1 is composed of 14 different subunits. Subunits NuoB, C, D, E, F, and G constitute the peripheral sector of the complex. It depends on [4Fe-4S] cluster as a cofactor.

It localises to the cell inner membrane. The catalysed reaction is a quinone + NADH + 5 H(+)(in) = a quinol + NAD(+) + 4 H(+)(out). NDH-1 shuttles electrons from NADH, via FMN and iron-sulfur (Fe-S) centers, to quinones in the respiratory chain. Couples the redox reaction to proton translocation (for every two electrons transferred, four hydrogen ions are translocated across the cytoplasmic membrane), and thus conserves the redox energy in a proton gradient. This Bordetella petrii (strain ATCC BAA-461 / DSM 12804 / CCUG 43448) protein is NADH-quinone oxidoreductase subunit B.